The following is a 124-amino-acid chain: UPF0482 protein YPK_1977 (124 aa).

Positions 1–32 (MMKINNLPRLIRAFLPATLLMLPLVWQTPALA) are cleaved as a signal peptide. The interval 47–69 (GGNNDPMSKEQARQSQQQWDETN) is disordered.

It belongs to the UPF0482 family.

This chain is UPF0482 protein YPK_1977, found in Yersinia pseudotuberculosis serotype O:3 (strain YPIII).